Consider the following 79-residue polypeptide: Acyl carrier protein (79 aa).

The Carrier domain occupies Asp-2–Val-77. Ser-37 is modified (O-(pantetheine 4'-phosphoryl)serine).

The protein belongs to the acyl carrier protein (ACP) family. Post-translationally, 4'-phosphopantetheine is transferred from CoA to a specific serine of apo-ACP by AcpS. This modification is essential for activity because fatty acids are bound in thioester linkage to the sulfhydryl of the prosthetic group.

The protein localises to the cytoplasm. It functions in the pathway lipid metabolism; fatty acid biosynthesis. Carrier of the growing fatty acid chain in fatty acid biosynthesis. The sequence is that of Acyl carrier protein from Burkholderia cenocepacia (strain HI2424).